The sequence spans 565 residues: Proline--tRNA ligase (565 aa).

Belongs to the class-II aminoacyl-tRNA synthetase family. ProS type 1 subfamily. In terms of assembly, homodimer.

It localises to the cytoplasm. The enzyme catalyses tRNA(Pro) + L-proline + ATP = L-prolyl-tRNA(Pro) + AMP + diphosphate. Functionally, catalyzes the attachment of proline to tRNA(Pro) in a two-step reaction: proline is first activated by ATP to form Pro-AMP and then transferred to the acceptor end of tRNA(Pro). As ProRS can inadvertently accommodate and process non-cognate amino acids such as alanine and cysteine, to avoid such errors it has two additional distinct editing activities against alanine. One activity is designated as 'pretransfer' editing and involves the tRNA(Pro)-independent hydrolysis of activated Ala-AMP. The other activity is designated 'posttransfer' editing and involves deacylation of mischarged Ala-tRNA(Pro). The misacylated Cys-tRNA(Pro) is not edited by ProRS. The chain is Proline--tRNA ligase from Francisella tularensis subsp. holarctica (strain FTNF002-00 / FTA).